Reading from the N-terminus, the 424-residue chain is STAM-binding protein (424 aa).

The tract at residues M1 to K127 is interaction with CHMP3. Phosphoserine occurs at positions 2 and 48. The segment at P227–P231 is interaction with STAM. Residue S243 is modified to Phosphoserine. In terms of domain architecture, MPN spans I257 to S388. H335, H337, D348, H350, C390, H396, and H398 together coordinate Zn(2+). Positions H335 to D348 match the JAMM motif motif.

This sequence belongs to the peptidase M67C family. Interacts with STAM. Interacts with SMAD6 and SMAD7. Interacts with CHMP3; the interaction appears to relieve the autoinhibition of CHMP3. Interacts with SMURF2 and RNF11; this interaction promotes ubiquitination. It depends on Zn(2+) as a cofactor. Post-translationally, phosphorylated after BMP type I receptor activation. In terms of processing, ubiquitinated by SMURF2 in the presence of RNF11. In terms of tissue distribution, expressed in brain.

It is found in the nucleus. It localises to the membrane. The protein localises to the cytoplasm. Its subcellular location is the early endosome. Its activity is regulated as follows. Inhibited by N-ethylmaleimide. Zinc metalloprotease that specifically cleaves 'Lys-63'-linked polyubiquitin chains. Does not cleave 'Lys-48'-linked polyubiquitin chains. Plays a role in signal transduction for cell growth and MYC induction mediated by IL-2 and GM-CSF. Potentiates BMP (bone morphogenetic protein) signaling by antagonizing the inhibitory action of SMAD6 and SMAD7. Has a key role in regulation of cell surface receptor-mediated endocytosis and ubiquitin-dependent sorting of receptors to lysosomes. Endosomal localization of STAMBP is required for efficient EGFR degradation but not for its internalization. Involved in the negative regulation of PI3K-AKT-mTOR and RAS-MAP signaling pathways. In Mus musculus (Mouse), this protein is STAM-binding protein (Stambp).